A 338-amino-acid polypeptide reads, in one-letter code: Ferredoxin--NADP reductase (338 aa).

The FAD site is built by aspartate 38, glutamine 46, tyrosine 51, valine 91, phenylalanine 125, aspartate 291, and threonine 331.

It belongs to the ferredoxin--NADP reductase type 2 family. In terms of assembly, homodimer. It depends on FAD as a cofactor.

It carries out the reaction 2 reduced [2Fe-2S]-[ferredoxin] + NADP(+) + H(+) = 2 oxidized [2Fe-2S]-[ferredoxin] + NADPH. This chain is Ferredoxin--NADP reductase, found in Orientia tsutsugamushi (strain Ikeda) (Rickettsia tsutsugamushi).